Reading from the N-terminus, the 420-residue chain is Histidine--tRNA ligase, chloroplastic (420 aa).

The protein belongs to the class-II aminoacyl-tRNA synthetase family.

The protein resides in the plastid. It localises to the chloroplast. The enzyme catalyses tRNA(His) + L-histidine + ATP = L-histidyl-tRNA(His) + AMP + diphosphate + H(+). The sequence is that of Histidine--tRNA ligase, chloroplastic from Gracilaria tenuistipitata var. liui (Red alga).